Here is a 1781-residue protein sequence, read N- to C-terminus: Chitin synthase 7 (1781 aa).

N-linked (GlcNAc...) asparagine glycans are attached at residues asparagine 133, asparagine 534, asparagine 629, asparagine 644, asparagine 655, and asparagine 660. The next 2 membrane-spanning stretches (helical) occupy residues 741–761 (AWVA…LKFV) and 777–797 (LVLF…IIGF). N-linked (GlcNAc...) asparagine glycans are attached at residues asparagine 889 and asparagine 1011. Residues 1048-1068 (LLLAFAIIICIVTAVKFLAAL) form a helical membrane-spanning segment. N-linked (GlcNAc...) asparagine glycosylation occurs at asparagine 1413. Transmembrane regions (helical) follow at residues 1444 to 1464 (LTGT…IYVL), 1471 to 1491 (IPYI…LIFI), and 1499 to 1519 (IGWM…LPLY). N-linked (GlcNAc...) asparagine glycosylation occurs at asparagine 1526. Positions 1677–1712 (QANLSPAAGGGHSRSGTALGFSSGSRSPMPDAMRSQ) are disordered. Positions 1690–1702 (RSGTALGFSSGSR) are enriched in polar residues. A DEK-C domain is found at 1723-1779 (GPTDMAIVESIRSVLCEVDLDTVTKKQVRALVEQRLQTELVGERRTFMDRQIDHELE).

It belongs to the chitin synthase family. Class V subfamily.

It localises to the cell membrane. The enzyme catalyses [(1-&gt;4)-N-acetyl-beta-D-glucosaminyl](n) + UDP-N-acetyl-alpha-D-glucosamine = [(1-&gt;4)-N-acetyl-beta-D-glucosaminyl](n+1) + UDP + H(+). Functionally, polymerizes chitin, a structural polymer of the cell wall and septum, by transferring the sugar moiety of UDP-GlcNAc to the non-reducing end of the growing chitin polymer. Shows additive effects in septum formation with CHS1, CHS2, CHS3A, CHS4, CHS5 and CHS6. Indispensable for perithecia formation and regulates conidiation. Plays an important role in the response to cell wall stress. Also required for hyphal growth and pathogenicity. The chain is Chitin synthase 7 from Gibberella zeae (strain ATCC MYA-4620 / CBS 123657 / FGSC 9075 / NRRL 31084 / PH-1) (Wheat head blight fungus).